The chain runs to 347 residues: tRNA pseudouridine synthase D (347 aa).

The Nucleophile role is filled by Asp81. The TRUD domain occupies Gly158–Lys305.

Belongs to the pseudouridine synthase TruD family.

The enzyme catalyses uridine(13) in tRNA = pseudouridine(13) in tRNA. Its function is as follows. Responsible for synthesis of pseudouridine from uracil-13 in transfer RNAs. The chain is tRNA pseudouridine synthase D from Vibrio parahaemolyticus serotype O3:K6 (strain RIMD 2210633).